Reading from the N-terminus, the 430-residue chain is Adenylosuccinate synthetase (430 aa).

Residues Gly12–Lys18 and Gly40–Thr42 contribute to the GTP site. Asp13 functions as the Proton acceptor in the catalytic mechanism. Residues Asp13 and Gly40 each coordinate Mg(2+). IMP is bound by residues Asp13–Lys16, Asn38–His41, Thr128, Arg142, Gln223, Thr238, and Arg302. The active-site Proton donor is the His41. Thr298 to Arg304 is a binding site for substrate. Residues Arg304, Ser330–Asp332, and Ser412–Gly414 contribute to the GTP site.

This sequence belongs to the adenylosuccinate synthetase family. As to quaternary structure, homodimer. Mg(2+) is required as a cofactor.

It is found in the cytoplasm. It catalyses the reaction IMP + L-aspartate + GTP = N(6)-(1,2-dicarboxyethyl)-AMP + GDP + phosphate + 2 H(+). It functions in the pathway purine metabolism; AMP biosynthesis via de novo pathway; AMP from IMP: step 1/2. Plays an important role in the de novo pathway of purine nucleotide biosynthesis. Catalyzes the first committed step in the biosynthesis of AMP from IMP. In Enterococcus faecalis (strain ATCC 700802 / V583), this protein is Adenylosuccinate synthetase.